We begin with the raw amino-acid sequence, 564 residues long: Protein CPR-5 (564 aa).

A disordered region spans residues 1 to 87 (MEALLLPPSP…TSNSNSTKRV (87 aa)). The span at 12–28 (PQNQITNPANSKPNHQS) shows a compositional bias: polar residues. The span at 29 to 38 (GDVHKDETMM) shows a compositional bias: basic and acidic residues. Low complexity predominate over residues 69–84 (SSSYCSTSSTSNSNST). The next 5 helical transmembrane spans lie at 347–367 (IMDW…LGVY), 411–431 (VRVW…TYFL), 443–463 (PISF…KLCV), 472–492 (LWLI…VFTL), and 526–546 (VYVV…FATF).

In terms of assembly, interacts with SIM and SMR1. As to expression, ubiquitous.

The protein resides in the membrane. The protein localises to the nucleus membrane. Functionally, may play a role in transcriptional processes. Negatively regulates the senescence and chlorotic lesions induced by biotic (e.g. pathogens) and abiotic (e.g. sugars, darkness) agents, probably by controlling programmed cell death (pcd). Negative regulator of plant programmed cell death (PCD) and effector-triggered immunity (ETI). Promotes cell division and endoreduplication (e.g. in trichomes). In Arabidopsis thaliana (Mouse-ear cress), this protein is Protein CPR-5.